The chain runs to 84 residues: Putative membrane protein insertion efficiency factor (84 aa).

Positions 63–84 (GEDPVPNHFTLRRNKKEKPSKS) are disordered.

Belongs to the UPF0161 family.

The protein localises to the cell membrane. Could be involved in insertion of integral membrane proteins into the membrane. This Streptococcus mutans serotype c (strain ATCC 700610 / UA159) protein is Putative membrane protein insertion efficiency factor.